The sequence spans 76 residues: Protein sigN132 (76 aa).

Positions 1–13 (MLFESISTLSNLK) are enriched in polar residues. The disordered stretch occupies residues 1–33 (MLFESISTLSNLKSASKSSMIASTGSTSSKSSN). Positions 14 to 33 (SASKSSMIASTGSTSSKSSN) are enriched in low complexity.

This chain is Protein sigN132, found in Dictyostelium discoideum (Social amoeba).